A 1002-amino-acid chain; its full sequence is Isoleucine--tRNA ligase, mitochondrial (1002 aa).

Positions 94–104 match the 'HIGH' region motif; that stretch reads PYANGELHLGH. The 'KMSKS' region signature appears at 668 to 672; that stretch reads KMSKS. Lysine 671 contacts ATP.

Belongs to the class-I aminoacyl-tRNA synthetase family.

The protein resides in the mitochondrion matrix. The catalysed reaction is tRNA(Ile) + L-isoleucine + ATP = L-isoleucyl-tRNA(Ile) + AMP + diphosphate. In Saccharomyces cerevisiae (strain ATCC 204508 / S288c) (Baker's yeast), this protein is Isoleucine--tRNA ligase, mitochondrial (ISM1).